The sequence spans 253 residues: MKKKILEVTNLHAAVNEIKIVKGLNLVVNAGEIHAIMGKNGSGKSTFAKIIAGHPDYTITNGDITYQHTSILELTPEDRAKRGIFLSFQYPIEIPGVTNADFLRLACNARRIYQGLPEMEPLEFFEYINSKLPLVDLKPSFLTRDVNEGFSGGEKKRNEILQMSILDTKLAVLDETDSGLDIDALRTVANGIKSLANDGNAIILITHYQRLLDYIKPDFVHVMQEGKIIKTGSASLALDLEKYGYDWLKNELK.

The 245-residue stretch at L6–N250 folds into the ABC transporter domain. An ATP-binding site is contributed by G38–S45.

The protein belongs to the ABC transporter superfamily. Ycf16 family.

Its subcellular location is the plastid. The protein resides in the chloroplast. The protein is Probable ATP-dependent transporter ycf16 (ycf16) of Guillardia theta (Cryptophyte).